The following is a 172-amino-acid chain: C-phycocyanin beta chain (172 aa).

Residue asparagine 72 is modified to N4-methylasparagine. Residues cysteine 82 and cysteine 153 each contribute to the (2R,3E)-phycocyanobilin site.

It belongs to the phycobiliprotein family. As to quaternary structure, heterodimer of an alpha and a beta subunit, which further assembles into trimers and the trimers into hexamers. The basic functional unit of phycobiliproteins is a ring-shaped hexamer formed from two back-to-back trimers contacting via the alpha chain subunits. The trimers are composed of alpha/beta subunit heterodimers arranged around a three-fold axis of symmetry. The phycoerythrins also contain a gamma subunit which is located in the center of the hexamer. Contains two covalently linked bilin chromophores.

It localises to the plastid. It is found in the chloroplast thylakoid membrane. Its function is as follows. Light-harvesting photosynthetic bile pigment-protein from the phycobiliprotein complex (phycobilisome, PBS). Phycocyanin is the major phycobiliprotein in the PBS rod. The chain is C-phycocyanin beta chain (cpcB) from Porphyra purpurea (Red seaweed).